Here is a 142-residue protein sequence, read N- to C-terminus: 3-hydroxyacyl-[acyl-carrier-protein] dehydratase FabZ (142 aa).

The active site involves His-50.

This sequence belongs to the thioester dehydratase family. FabZ subfamily.

The protein localises to the cytoplasm. The catalysed reaction is a (3R)-hydroxyacyl-[ACP] = a (2E)-enoyl-[ACP] + H2O. Involved in unsaturated fatty acids biosynthesis. Catalyzes the dehydration of short chain beta-hydroxyacyl-ACPs and long chain saturated and unsaturated beta-hydroxyacyl-ACPs. The chain is 3-hydroxyacyl-[acyl-carrier-protein] dehydratase FabZ from Clostridium botulinum (strain Alaska E43 / Type E3).